The sequence spans 77 residues: Acyl carrier protein (77 aa).

The Carrier domain maps to 2–77 (AEVLEKVTKI…DAVKYIEANA (76 aa)). O-(pantetheine 4'-phosphoryl)serine is present on serine 37.

It belongs to the acyl carrier protein (ACP) family. In terms of processing, 4'-phosphopantetheine is transferred from CoA to a specific serine of apo-ACP by AcpS. This modification is essential for activity because fatty acids are bound in thioester linkage to the sulfhydryl of the prosthetic group.

Its subcellular location is the cytoplasm. Its pathway is lipid metabolism; fatty acid biosynthesis. Its function is as follows. Carrier of the growing fatty acid chain in fatty acid biosynthesis. The sequence is that of Acyl carrier protein from Listeria innocua serovar 6a (strain ATCC BAA-680 / CLIP 11262).